The primary structure comprises 197 residues: Baseplate puncturing device gp45 (197 aa).

The segment at 172-197 is disordered; it reads DAIINGKSTDKHIHRGDSGGTTGPMQ. The span at 179 to 188 shows a compositional bias: basic and acidic residues; that stretch reads STDKHIHRGD. His-183 and His-185 together coordinate Fe cation. Ca(2+) contacts are provided by Asp-188 and Ser-189. Asp-188 serves as a coordination point for chloride.

Homotrimer. Part of a complex composed of three DNA circularization protein N, three baseplate hub protein gp44 and three sub-complex wedge (made of two copies of each baseplate protein gp46, gp47 and gp48) that forms the baseplate. Ca(2+) serves as cofactor. Chloride is required as a cofactor. Requires Fe cation as cofactor.

The protein resides in the virion. It localises to the host cytoplasm. Component of the baseplate that forms a central needlelike spike used to puncture the host cell membrane for tube insertion during virus entry. Probably involved in baseplate and tail assembly. Serves as the distal plug of tail tube channel and might regulate the process of the phage DNA and protein ejection into the host cell. This chain is Baseplate puncturing device gp45, found in Escherichia phage Mu (Bacteriophage Mu).